The primary structure comprises 144 residues: Large ribosomal subunit protein uL11 (144 aa).

Belongs to the universal ribosomal protein uL11 family. Part of the ribosomal stalk of the 50S ribosomal subunit. Interacts with L10 and the large rRNA to form the base of the stalk. L10 forms an elongated spine to which L12 dimers bind in a sequential fashion forming a multimeric L10(L12)X complex. In terms of processing, one or more lysine residues are methylated.

Functionally, forms part of the ribosomal stalk which helps the ribosome interact with GTP-bound translation factors. In Granulibacter bethesdensis (strain ATCC BAA-1260 / CGDNIH1), this protein is Large ribosomal subunit protein uL11.